The following is a 344-amino-acid chain: AA9 family lytic polysaccharide monooxygenase J (344 aa).

The first 20 residues, 1 to 20 (MKSSLLVVLTAGLAVRDAIA), serve as a signal peptide directing secretion. Cu(2+) is bound by residues His-21 and His-99. Cys-58 and Cys-194 are oxidised to a cystine. Residues His-180 and Gln-189 each contribute to the O2 site. A Cu(2+)-binding site is contributed by Tyr-191. Residues 272 to 301 (PGGKPASGGSDGNAPEVAEPSGGEGSPSAP) form a disordered region. Residues 285–301 (APEVAEPSGGEGSPSAP) are compositionally biased toward low complexity. The CBM1 domain occupies 304–341 (CEVAAYGQCGGDQYSGCTQCASGYTCKAVSPPYYSQCA).

Belongs to the polysaccharide monooxygenase AA9 family. Cu(2+) is required as a cofactor.

It is found in the secreted. The enzyme catalyses [(1-&gt;4)-beta-D-glucosyl]n+m + reduced acceptor + O2 = 4-dehydro-beta-D-glucosyl-[(1-&gt;4)-beta-D-glucosyl]n-1 + [(1-&gt;4)-beta-D-glucosyl]m + acceptor + H2O.. Its function is as follows. Lytic polysaccharide monooxygenase (LPMO) that depolymerizes crystalline and amorphous polysaccharides via the oxidation of scissile alpha- or beta-(1-4)-glycosidic bonds, yielding C4 oxidation products. Catalysis by LPMOs requires the reduction of the active-site copper from Cu(II) to Cu(I) by a reducing agent and H(2)O(2) or O(2) as a cosubstrate. The sequence is that of AA9 family lytic polysaccharide monooxygenase J (gh61-10) from Neurospora crassa (strain ATCC 24698 / 74-OR23-1A / CBS 708.71 / DSM 1257 / FGSC 987).